The chain runs to 1490 residues: Leucine-rich repeat-containing protein 7 (1490 aa).

LRR repeat units lie at residues 23–44, 47–68, 70–91, 93–114, 116–137, 139–161, 162–183, 185–206, 208–229, 231–253, 254–275, 277–298, 300–321, 323–344, 346–367, 369–391, and 392–413; these read IISV…VFNF, TLEE…LFNC, ALRK…IASL, NLKE…IKCC, CLTI…FTQL, NLTQ…GRLV, KLRI…MHKL, QLER…LDQI, NLRE…IGKL, MLVY…SGCE, ALED…IGLL, KLTT…IGNL, LLEE…IGYL, SLRT…IGSC, NVTV…IGQM, RLRV…TKLK, and ELAA…QTEA. S439, S441, and S443 each carry phosphoserine. Over residues 663 to 676 the composition is skewed to basic and acidic residues; sequence KKESTDESEVDKTH. 3 disordered regions span residues 663-709, 775-808, and 822-899; these read KKES…VGSL, DNTG…HGRR, and ELEQ…YHDP. The span at 677 to 686 shows a compositional bias: polar residues; it reads CLNNSVSSGT. Positions 687–700 are enriched in low complexity; the sequence is YSDYSPSQASSASS. The segment covering 787–799 has biased composition (polar residues); that stretch reads ENANNNPLLSSKA. A Phosphothreonine modification is found at T831. The residue at position 850 (S850) is a Phosphoserine. A compositionally biased stretch (low complexity) spans 859–871; the sequence is PSKLETTPTTSPL. T865 is subject to Phosphothreonine. S869 is subject to Phosphoserine. Residues 872-882 show a composition bias toward basic and acidic residues; it reads PERKDHMKEPT. A phosphoserine mark is found at S947, S949, and S1118. Position 1149 is an omega-N-methylarginine (R1149). Residues 1194–1217 are compositionally biased toward polar residues; it reads LTQRRPLSARSYSTESYGASQTRP. The disordered stretch occupies residues 1194–1218; the sequence is LTQRRPLSARSYSTESYGASQTRPV. S1233 bears the Phosphoserine mark. 2 disordered regions span residues 1238 to 1265 and 1282 to 1312; these read GNYG…SCGK and RLDR…PYPL. Over residues 1243–1263 the composition is skewed to basic and acidic residues; it reads KTSDNSDIKTRPTPVKGEESC. Over residues 1286 to 1307 the composition is skewed to polar residues; that stretch reads TPSQQSNILDNGQEDVSPSGQW. Residues S1288 and S1392 each carry the phosphoserine modification. Positions 1398–1488 constitute a PDZ domain; it reads EQFCVRIEKN…TVDLVIQREL (91 aa).

This sequence belongs to the LAP (LRR and PDZ) protein family. As to quaternary structure, interacts with CNKSR2 and DLG4. Interacts with CTNND2/Catenin delta-2. Forms a complex with N-cadherin through CTNND2. Interacts with CAMK2A. O-glycosylated and phosphorylated. Brain-specific. Highly concentrated at synapses.

It is found in the cytoplasm. The protein resides in the postsynaptic density. Functionally, required for normal synaptic spine architecture and function. Necessary for DISC1 and GRM5 localization to postsynaptic density complexes and for both N-methyl D-aspartate receptor-dependent and metabotropic glutamate receptor-dependent long term depression. The polypeptide is Leucine-rich repeat-containing protein 7 (Lrrc7) (Rattus norvegicus (Rat)).